A 317-amino-acid polypeptide reads, in one-letter code: Transaldolase (317 aa).

Catalysis depends on Lys-132, which acts as the Schiff-base intermediate with substrate.

This sequence belongs to the transaldolase family. Type 1 subfamily. Homodimer.

The protein resides in the cytoplasm. The enzyme catalyses D-sedoheptulose 7-phosphate + D-glyceraldehyde 3-phosphate = D-erythrose 4-phosphate + beta-D-fructose 6-phosphate. It participates in carbohydrate degradation; pentose phosphate pathway; D-glyceraldehyde 3-phosphate and beta-D-fructose 6-phosphate from D-ribose 5-phosphate and D-xylulose 5-phosphate (non-oxidative stage): step 2/3. In terms of biological role, transaldolase is important for the balance of metabolites in the pentose-phosphate pathway. In Shigella dysenteriae serotype 1 (strain Sd197), this protein is Transaldolase.